A 354-amino-acid polypeptide reads, in one-letter code: Uroporphyrinogen decarboxylase (354 aa).

Residues 27–31 (RQAGR), D77, Y154, T209, and H327 each bind substrate.

Belongs to the uroporphyrinogen decarboxylase family. Homodimer.

It is found in the cytoplasm. The enzyme catalyses uroporphyrinogen III + 4 H(+) = coproporphyrinogen III + 4 CO2. The protein operates within porphyrin-containing compound metabolism; protoporphyrin-IX biosynthesis; coproporphyrinogen-III from 5-aminolevulinate: step 4/4. Its function is as follows. Catalyzes the decarboxylation of four acetate groups of uroporphyrinogen-III to yield coproporphyrinogen-III. This is Uroporphyrinogen decarboxylase from Cronobacter sakazakii (strain ATCC BAA-894) (Enterobacter sakazakii).